The sequence spans 403 residues: RILP-like protein 1 (403 aa).

The residue at position 7 (S7) is a Phosphoserine. The RH1 domain occupies 10 to 97 (AAESALEKNV…RLERMDRIEK (88 aa)). C47 is modified (S-nitrosocysteine). The stretch at 76–265 (ELDELRLELD…GELNQNGEEE (190 aa)) forms a coiled coil. The region spanning 291-356 (RPRFTLQELR…PQPESGIKRL (66 aa)) is the RH2 domain. Residues 329–348 (EEENQIPQPPPIAHPRMSPQ) form a disordered region.

Belongs to the RILPL family. Interacts (when S-nitrosylated) with GAPDH. Interacts with RAB8A; interaction is dependent on the phosphorylation of 'Thr-72' of RAB8A. Interacts with RAB10 and RAB12; the interaction is dependent on the phosphorylation of 'Thr-73' of RAB10, and 'Ser-105' of RAB12. Post-translationally, S-nitrosylation is required for the interaction with GAPDH.

The protein resides in the cytoplasm. Its subcellular location is the cytosol. The protein localises to the cytoskeleton. It is found in the microtubule organizing center. It localises to the centrosome. The protein resides in the centriole. Its subcellular location is the cilium basal body. Functionally, plays a role in the regulation of cell shape and polarity. Plays a role in cellular protein transport, including protein transport away from primary cilia. Neuroprotective protein, which acts by sequestring GAPDH in the cytosol and prevent the apoptotic function of GAPDH in the nucleus. Competes with SIAH1 for binding GAPDH. Does not regulate lysosomal morphology and distribution. Binds to RAB10 following LRRK2-mediated RAB10 phosphorylation which leads to inhibition of ciliogenesis. The sequence is that of RILP-like protein 1 (RILPL1) from Bos taurus (Bovine).